The chain runs to 370 residues: Chaperone protein DnaJ (370 aa).

The J domain maps to 4–68; sequence DYYQVLGVSK…QKRAAYDRFG (65 aa). A CR-type zinc finger spans residues 133-211; that stretch reads GIEKNISFSS…CHGMGRYHKQ (79 aa). Positions 146, 149, 163, 166, 185, 188, 199, and 202 each coordinate Zn(2+). CXXCXGXG motif repeat units follow at residues 146–153, 163–170, 185–192, and 199–206; these read CDACHGTG, CDSCGGVG, CHKCQGNG, and CKKCHGMG.

This sequence belongs to the DnaJ family. In terms of assembly, homodimer. Zn(2+) is required as a cofactor.

The protein resides in the cytoplasm. In terms of biological role, participates actively in the response to hyperosmotic and heat shock by preventing the aggregation of stress-denatured proteins and by disaggregating proteins, also in an autonomous, DnaK-independent fashion. Unfolded proteins bind initially to DnaJ; upon interaction with the DnaJ-bound protein, DnaK hydrolyzes its bound ATP, resulting in the formation of a stable complex. GrpE releases ADP from DnaK; ATP binding to DnaK triggers the release of the substrate protein, thus completing the reaction cycle. Several rounds of ATP-dependent interactions between DnaJ, DnaK and GrpE are required for fully efficient folding. Also involved, together with DnaK and GrpE, in the DNA replication of plasmids through activation of initiation proteins. This is Chaperone protein DnaJ from Rickettsia typhi (strain ATCC VR-144 / Wilmington).